Here is a 249-residue protein sequence, read N- to C-terminus: Leucyl/phenylalanyl-tRNA--protein transferase (249 aa).

This sequence belongs to the L/F-transferase family.

The protein localises to the cytoplasm. The enzyme catalyses N-terminal L-lysyl-[protein] + L-leucyl-tRNA(Leu) = N-terminal L-leucyl-L-lysyl-[protein] + tRNA(Leu) + H(+). It catalyses the reaction N-terminal L-arginyl-[protein] + L-leucyl-tRNA(Leu) = N-terminal L-leucyl-L-arginyl-[protein] + tRNA(Leu) + H(+). It carries out the reaction L-phenylalanyl-tRNA(Phe) + an N-terminal L-alpha-aminoacyl-[protein] = an N-terminal L-phenylalanyl-L-alpha-aminoacyl-[protein] + tRNA(Phe). Functionally, functions in the N-end rule pathway of protein degradation where it conjugates Leu, Phe and, less efficiently, Met from aminoacyl-tRNAs to the N-termini of proteins containing an N-terminal arginine or lysine. The protein is Leucyl/phenylalanyl-tRNA--protein transferase of Xanthomonas axonopodis pv. citri (strain 306).